An 89-amino-acid polypeptide reads, in one-letter code: Small ribosomal subunit protein uS15 (89 aa).

This sequence belongs to the universal ribosomal protein uS15 family. As to quaternary structure, part of the 30S ribosomal subunit. Forms a bridge to the 50S subunit in the 70S ribosome, contacting the 23S rRNA.

Its function is as follows. One of the primary rRNA binding proteins, it binds directly to 16S rRNA where it helps nucleate assembly of the platform of the 30S subunit by binding and bridging several RNA helices of the 16S rRNA. Forms an intersubunit bridge (bridge B4) with the 23S rRNA of the 50S subunit in the ribosome. This chain is Small ribosomal subunit protein uS15, found in Micrococcus luteus (strain ATCC 4698 / DSM 20030 / JCM 1464 / CCM 169 / CCUG 5858 / IAM 1056 / NBRC 3333 / NCIMB 9278 / NCTC 2665 / VKM Ac-2230) (Micrococcus lysodeikticus).